The chain runs to 329 residues: Serpentine receptor class alpha-2 (329 aa).

A run of 7 helical transmembrane segments spans residues 25-45, 57-77, 104-124, 144-164, 188-208, 240-260, and 273-293; these read FVYL…VKIL, ILLV…GIEA, YYKI…GLLI, CAVI…LIVW, HYFT…TFIL, FLTV…IVLV, and LLVV…VILV.

This sequence belongs to the nematode receptor-like protein sra family.

The protein localises to the membrane. The sequence is that of Serpentine receptor class alpha-2 (sra-2) from Caenorhabditis elegans.